The following is a 466-amino-acid chain: Soluble pyridine nucleotide transhydrogenase (466 aa).

36-45 (EKESSVGGGC) contacts FAD.

The protein belongs to the class-I pyridine nucleotide-disulfide oxidoreductase family. It depends on FAD as a cofactor.

It is found in the cytoplasm. The enzyme catalyses NAD(+) + NADPH = NADH + NADP(+). In terms of biological role, conversion of NADPH, generated by peripheral catabolic pathways, to NADH, which can enter the respiratory chain for energy generation. The polypeptide is Soluble pyridine nucleotide transhydrogenase (Vibrio atlanticus (strain LGP32) (Vibrio splendidus (strain Mel32))).